The sequence spans 352 residues: Phosphoribosylformylglycinamidine cyclo-ligase (352 aa).

Belongs to the AIR synthase family.

The protein localises to the cytoplasm. It carries out the reaction 2-formamido-N(1)-(5-O-phospho-beta-D-ribosyl)acetamidine + ATP = 5-amino-1-(5-phospho-beta-D-ribosyl)imidazole + ADP + phosphate + H(+). It participates in purine metabolism; IMP biosynthesis via de novo pathway; 5-amino-1-(5-phospho-D-ribosyl)imidazole from N(2)-formyl-N(1)-(5-phospho-D-ribosyl)glycinamide: step 2/2. This Pseudomonas savastanoi pv. phaseolicola (strain 1448A / Race 6) (Pseudomonas syringae pv. phaseolicola (strain 1448A / Race 6)) protein is Phosphoribosylformylglycinamidine cyclo-ligase.